The following is a 348-amino-acid chain: Ubiquitin thioesterase OTU1 (348 aa).

Basic residues predominate over residues 1-11 (MFGPAKGRHFG). The interval 1–39 (MFGPAKGRHFGVHPAPGFPGGVSQQAAGTKAGPAGAWPV) is disordered. Positions 50–128 (RCKAKDGTHV…IIEEDQTRPR (79 aa)) are UBX-like. Residues 149–274 (LTRTVVPADN…GIHYDPLQRN (126 aa)) form the OTU domain. The cys-loop stretch occupies residues 154–160 (VPADNSC). Residue Asp-157 is part of the active site. The Nucleophile role is filled by Cys-160. A variable-loop region spans residues 213-223 (IKRDDTWGGAI). Positions 263–267 (YDGIH) are his-loop. Ile-266 is a substrate binding site. His-267 is an active-site residue. Residues 291 to 296 (DIVLVQ) are S2 site. Residues 318 to 342 (LRCMVCQKGLTGQAEAREHAKETGH) form a C2H2-type zinc finger. His-342 is a catalytic residue.

Interacts with VCP; the interaction is direct. Interacts with FAF2/UBXD8. Interacts with DERL1; however interaction is dependent on the UBAX-like region, suggesting that it may be indirect. Interacts with PLAA, UBXN6 and VCP; may form a complex involved in macroautophagy.

The protein localises to the cytoplasm. It carries out the reaction Thiol-dependent hydrolysis of ester, thioester, amide, peptide and isopeptide bonds formed by the C-terminal Gly of ubiquitin (a 76-residue protein attached to proteins as an intracellular targeting signal).. In terms of biological role, hydrolase that can remove conjugated ubiquitin from proteins and participates in endoplasmic reticulum-associated degradation (ERAD) for misfolded lumenal proteins. May act by triming the ubiquitin chain on the associated substrate to facilitate their threading through the VCP/p97 pore. Ubiquitin moieties on substrates may present a steric impediment to the threading process when the substrate is transferred to the VCP pore and threaded through VCP's axial channel. Mediates deubiquitination of 'Lys-27'-, 'Lys-29'- and 'Lys-33'-linked polyubiquitin chains. Also able to hydrolyze 'Lys-11'-linked ubiquitin chains. Cleaves both polyubiquitin and di-ubiquitin. May play a role in macroautophagy, regulating for instance the clearance of damaged lysosomes. May recruit PLAA, UBXN6 and VCP to damaged lysosome membranes decorated with K48-linked ubiquitin chains and remove these chains allowing autophagosome formation. The polypeptide is Ubiquitin thioesterase OTU1 (YOD1) (Homo sapiens (Human)).